The chain runs to 223 residues: Large ribosomal subunit protein uL4 (223 aa).

Residues 47–72 (GTASTKTRGEVAGGGRKPWPQKHTGR) are disordered.

It belongs to the universal ribosomal protein uL4 family. In terms of assembly, part of the 50S ribosomal subunit.

Functionally, one of the primary rRNA binding proteins, this protein initially binds near the 5'-end of the 23S rRNA. It is important during the early stages of 50S assembly. It makes multiple contacts with different domains of the 23S rRNA in the assembled 50S subunit and ribosome. In terms of biological role, forms part of the polypeptide exit tunnel. The polypeptide is Large ribosomal subunit protein uL4 (Fervidobacterium nodosum (strain ATCC 35602 / DSM 5306 / Rt17-B1)).